Consider the following 60-residue polypeptide: UPF0434 protein NMC0623 (60 aa).

This sequence belongs to the UPF0434 family.

The protein is UPF0434 protein NMC0623 of Neisseria meningitidis serogroup C / serotype 2a (strain ATCC 700532 / DSM 15464 / FAM18).